The sequence spans 336 residues: Dihydroorotate dehydrogenase (quinone) (336 aa).

Residues alanine 62–lysine 66 and threonine 86 each bind FMN. Lysine 66 is a binding site for substrate. Residue asparagine 111–phenylalanine 115 participates in substrate binding. FMN is bound by residues asparagine 139 and asparagine 172. Asparagine 172 is a substrate binding site. Serine 175 functions as the Nucleophile in the catalytic mechanism. Residue asparagine 177 coordinates substrate. FMN-binding residues include lysine 217 and threonine 245. Residue asparagine 246 to threonine 247 coordinates substrate. Residues glycine 268, glycine 297, and tyrosine 318 to serine 319 contribute to the FMN site.

This sequence belongs to the dihydroorotate dehydrogenase family. Type 2 subfamily. Monomer. Requires FMN as cofactor.

The protein resides in the cell membrane. It catalyses the reaction (S)-dihydroorotate + a quinone = orotate + a quinol. It participates in pyrimidine metabolism; UMP biosynthesis via de novo pathway; orotate from (S)-dihydroorotate (quinone route): step 1/1. Catalyzes the conversion of dihydroorotate to orotate with quinone as electron acceptor. In Klebsiella pneumoniae subsp. pneumoniae (strain ATCC 700721 / MGH 78578), this protein is Dihydroorotate dehydrogenase (quinone).